A 591-amino-acid polypeptide reads, in one-letter code: V-type ATP synthase alpha chain (591 aa).

242–249 (GPFGAGKT) is a binding site for ATP.

The protein belongs to the ATPase alpha/beta chains family.

It catalyses the reaction ATP + H2O + 4 H(+)(in) = ADP + phosphate + 5 H(+)(out). Functionally, produces ATP from ADP in the presence of a proton gradient across the membrane. The V-type alpha chain is a catalytic subunit. The protein is V-type ATP synthase alpha chain of Chlamydia trachomatis serovar A (strain ATCC VR-571B / DSM 19440 / HAR-13).